A 171-amino-acid chain; its full sequence is Putative phosphoesterase ABC1741 (171 aa).

The Proton donor role is filled by His34. 2 consecutive short sequence motifs (HXTX) follow at residues His34–Leu37 and His116–Ile119. The Proton acceptor role is filled by His116.

Belongs to the 2H phosphoesterase superfamily. YjcG family.

In Shouchella clausii (strain KSM-K16) (Alkalihalobacillus clausii), this protein is Putative phosphoesterase ABC1741.